The chain runs to 75 residues: Alpha-amylase inhibitor Paim-2 (75 aa).

Intrachain disulfides connect Cys10-Cys26 and Cys44-Cys72.

Inhibits mammalian alpha-amylases specifically but has no action on plant and microbial alpha-amylases. The polypeptide is Alpha-amylase inhibitor Paim-2 (Streptomyces olivaceoviridis (Streptomyces corchorusii)).